Consider the following 751-residue polypeptide: Serine/threonine-protein kinase B-raf (751 aa).

Gly residues predominate over residues 1–32 (MAALSGGGGSSSGGGGGGGGGGGGGDGGGGAE). Residues 1-55 (MAALSGGGGSSSGGGGGGGGGGGGGDGGGGAEQGQALFNGDMEPEAGAGAAASSA) are disordered. Ala-2 carries the post-translational modification N-acetylalanine. Positions 46–55 (AGAGAAASSA) are enriched in low complexity. At Ser-135 the chain carries Phosphoserine. In terms of domain architecture, RBD spans 139 to 211 (PIVRVFLPNK…TGEELHVEVL (73 aa)). 8 residues coordinate Zn(2+): His-219, Cys-232, Cys-235, Cys-245, Cys-248, His-253, Cys-256, and Cys-264. Positions 288–440 (EASFPETALP…SSDDWEIPDG (153 aa)) are disordered. Positions 297-324 (PSGSSSAPPSDSTGPQILTSPSPSKSIP) are enriched in low complexity. A Phosphoserine modification is found at Ser-316. Residues 331–346 (PADEDHRNQFGQRDRS) are compositionally biased toward basic and acidic residues. Residue Ser-348 is modified to Phosphoserine. Thr-356 is subject to Phosphothreonine; by autocatalysis. Residue Thr-379 is modified to Phosphothreonine. A Phosphoserine modification is found at Ser-382. At Thr-384 the chain carries Phosphothreonine. The segment covering 406-432 (QRERKSSSSSSSEDRSRMKTLGRRDSS) has biased composition (basic and acidic residues). Ser-431 and Ser-432 each carry phosphoserine. One can recognise a Protein kinase domain in the interval 442–702 (ITVGQRIGSG…PQILASIELL (261 aa)). Residues 448-456 (IGSGSFGTV) and Lys-468 contribute to the ATP site. Residue Asp-561 is the Proton acceptor of the active site. A Glycyl lysine isopeptide (Lys-Gly) (interchain with G-Cter in ubiquitin) cross-link involves residue Lys-563. The residue at position 656 (Arg-656) is an Omega-N-methylarginine; by PRMT5. Ser-714 and Ser-735 each carry phosphoserine. Residue Thr-738 is modified to Phosphothreonine; by MAPK1.

The protein belongs to the protein kinase superfamily. TKL Ser/Thr protein kinase family. RAF subfamily. In terms of assembly, monomer. Homodimer. Heterodimerizes with RAF1, and the heterodimer possesses a highly increased kinase activity compared to the respective homodimers or monomers. Heterodimerization is mitogen-regulated and enhanced by 14-3-3 proteins. MAPK1/ERK2 activation can induce a negative feedback that promotes the dissociation of the heterodimer by phosphorylating BRAF at Thr-738. Heterodimerizes (via N-terminus) with KSR1 (via N-terminus) or KSR2 (via N-terminus) in a MAP2K1-dependent manner. Interacts with MAP2K1 and MAP2K2. Found in a complex with at least BRAF, HRAS, MAP2K1, MAPK3 and RGS14. Interacts with RIT1. Interacts (via N-terminus) with RGS14 (via RBD domains); the interaction mediates the formation of a ternary complex with RAF1, a ternary complex inhibited by GNAI1. Interacts with DGKH. Interacts with PRMT5. Interacts with AKAP13, MAP2K1 and KSR1. Identified in a complex with AKAP13, KSR1 and MAP2K1. Interacts with FNIP1 and FNIP2. Zn(2+) is required as a cofactor. Post-translationally, phosphorylation at Ser-348 by SGK1 inhibits its activity. Dephosphorylation of Ser-348 by the SHOC2-MRAS-PP1c (SMP) complex consisting of SHOC2, GTP-bound M-Ras/MRAS and the catalytic subunit of protein phosphatase 1 (PPP1CA, PPP1CB or PPP1CC); this relieves inactivation and stimulates kinase activity. Methylation by PRMT5 decreases stability and kinase activity. In terms of processing, ubiquitinated by RNF149; which leads to proteasomal degradation. Polyubiquitinated at Lys-615 in response to EGF.

It is found in the nucleus. The protein resides in the cytoplasm. The protein localises to the cell membrane. The enzyme catalyses L-seryl-[protein] + ATP = O-phospho-L-seryl-[protein] + ADP + H(+). The catalysed reaction is L-threonyl-[protein] + ATP = O-phospho-L-threonyl-[protein] + ADP + H(+). Its activity is regulated as follows. In quiescent cells, maintained in an inactive state via an intramolecular interaction between the protein kinase and N-terminal domains. Following mitogen-mediated cell activation, binds via its RGB domain to active HRAS (GTP-bound) which releases the inhibitory intramolecular interaction between the two domains. This allows the MAP2K1-mediated dimerization of KSR1 or KSR2, and BRAF which activates BRAF. Functionally, involved in the transduction of mitogenic signals from the cell membrane to the nucleus. Phosphorylates MAP2K1, and thereby activates the MAP kinase signal transduction pathway. Phosphorylates PFKFB2. May play a role in the postsynaptic responses of hippocampal neurons. The polypeptide is Serine/threonine-protein kinase B-raf (Mus musculus (Mouse)).